The primary structure comprises 200 residues: UPF0316 protein Mhun_0543 (200 aa).

The next 3 membrane-spanning stretches (helical) occupy residues 3-23 (VGFLSSDLFTFGLIPVLIFLA), 44-64 (FIAPVFGFFEVTIWLLAIGQV), and 71-91 (PICYIAYGAGFAAGTYIGMEL).

Belongs to the UPF0316 family.

It is found in the cell membrane. The sequence is that of UPF0316 protein Mhun_0543 from Methanospirillum hungatei JF-1 (strain ATCC 27890 / DSM 864 / NBRC 100397 / JF-1).